Here is a 1067-residue protein sequence, read N- to C-terminus: Sal-like protein 4 (1067 aa).

The interval 1–62 (MSRRKQAKPQ…SEDSIPVKRP (62 aa)) is disordered. Low complexity predominate over residues 15–42 (EEGQGEQPQQLPSPDLAEALAAEEPGAP). Serine 53 bears the Phosphoserine mark. Residues 68 to 90 (HICNKCCAEFFSLSEFMEHKKSC) form a C2H2-type 1; atypical zinc finger. Residues 115–140 (ALSHQLGSPSNKDSLQENGSSSGDLK) form a disordered region. The segment covering 119–137 (QLGSPSNKDSLQENGSSSG) has biased composition (polar residues). Residue lysine 151 forms a Glycyl lysine isopeptide (Lys-Gly) (interchain with G-Cter in SUMO1); alternate linkage. A Glycyl lysine isopeptide (Lys-Gly) (interchain with G-Cter in SUMO2); alternate cross-link involves residue lysine 151. Glycyl lysine isopeptide (Lys-Gly) (interchain with G-Cter in SUMO2) cross-links involve residues lysine 170, lysine 185, and lysine 291. Phosphoserine is present on serine 308. Lysine 317 is covalently cross-linked (Glycyl lysine isopeptide (Lys-Gly) (interchain with G-Cter in SUMO1); alternate). Lysine 317 participates in a covalent cross-link: Glycyl lysine isopeptide (Lys-Gly) (interchain with G-Cter in SUMO2); alternate. Lysine 377 is covalently cross-linked (Glycyl lysine isopeptide (Lys-Gly) (interchain with G-Cter in SUMO2)). Lysine 379 participates in a covalent cross-link: Glycyl lysine isopeptide (Lys-Gly) (interchain with G-Cter in SUMO1); alternate. Lysine 379 participates in a covalent cross-link: Glycyl lysine isopeptide (Lys-Gly) (interchain with G-Cter in SUMO2); alternate. C2H2-type zinc fingers lie at residues 387–409 (HKCR…LRSH) and 415–437 (YVCP…LQRH). Lysine 441 participates in a covalent cross-link: Glycyl lysine isopeptide (Lys-Gly) (interchain with G-Cter in SUMO2). The segment at 471 to 521 (DESSLSVDAEPVPVTGTPSLGLPQKLTSGPNSRDLMGGSLPNDMQPGPSPE) is disordered. A Glycyl lysine isopeptide (Lys-Gly) (interchain with G-Cter in SUMO2) cross-link involves residue lysine 557. 2 C2H2-type zinc fingers span residues 573–595 (NECL…YRTH) and 601–623 (FQCK…LGVH). Residues lysine 604 and lysine 630 each participate in a glycyl lysine isopeptide (Lys-Gly) (interchain with G-Cter in SUMO2) cross-link. Residues 633–655 (HSCPICQKKFTNAVMLQQHIRMH) form a C2H2-type 6 zinc finger. 2 disordered regions span residues 682-716 (ENGS…STVS) and 752-835 (RQSS…SLPP). Over residues 693-704 (DAAEGMEAEEVC) the composition is skewed to acidic residues. 2 stretches are compositionally biased toward polar residues: residues 707–716 (DVPSGPSTVS) and 752–761 (RQSSRENSSL). Phosphoserine is present on residues serine 785 and serine 798. Positions 798–809 (SPANSQAGSVKS) are enriched in polar residues. The span at 810–829 (RSPEGHKAEGVESCRVDTEG) shows a compositional bias: basic and acidic residues. Lysine 846 participates in a covalent cross-link: Glycyl lysine isopeptide (Lys-Gly) (interchain with G-Cter in SUMO1); alternate. Lysine 846 participates in a covalent cross-link: Glycyl lysine isopeptide (Lys-Gly) (interchain with G-Cter in SUMO2); alternate. The segment at 880–902 (HCCTRCGKNFSSASALQIHERTH) adopts a C2H2-type 7 zinc-finger fold. Lysine 906 is covalently cross-linked (Glycyl lysine isopeptide (Lys-Gly) (interchain with G-Cter in SUMO2)). The C2H2-type 8 zinc finger occupies 908 to 930 (FVCNICGRAFTTKGNLKVHYMTH). Glycyl lysine isopeptide (Lys-Gly) (interchain with G-Cter in SUMO2) cross-links involve residues lysine 942 and lysine 957. At serine 1029 the chain carries Phosphoserine.

Belongs to the sal C2H2-type zinc-finger protein family. In terms of assembly, interacts with POU5F1/OCT4. Interacts with NANOG. Interacts with BEND3. Interacts with NSD2 (via PHD-type zinc fingers 1, 2 and 3). Interacts with NRBP1. Post-translationally, sumoylation with both SUMO1 and SUMO2 regulates the stability, subcellular localization, transcriptional activity, and may reduce interaction with POU5F1/OCT4.

It localises to the cytoplasm. The protein localises to the nucleus. Transcription factor with a key role in the maintenance and self-renewal of embryonic and hematopoietic stem cells. The polypeptide is Sal-like protein 4 (Sall4) (Mus musculus (Mouse)).